The primary structure comprises 451 residues: Cytochrome c biogenesis protein CcsB (451 aa).

The next 3 membrane-spanning stretches (helical) occupy residues 30 to 50 (LRLA…GTVI), 89 to 109 (TWWF…CTFT), and 175 to 195 (IGPI…IWGA).

Belongs to the Ccs1/CcsB family. As to quaternary structure, may interact with CcsA.

It is found in the cellular thylakoid membrane. Functionally, required during biogenesis of c-type cytochromes (cytochrome c6 and cytochrome f) at the step of heme attachment. This is Cytochrome c biogenesis protein CcsB from Crocosphaera subtropica (strain ATCC 51142 / BH68) (Cyanothece sp. (strain ATCC 51142)).